Here is a 489-residue protein sequence, read N- to C-terminus: Probable guanine deaminase (489 aa).

Zn(2+) is bound by residues His-100 and His-102. Substrate contacts are provided by residues 102–105 (HVSQ), 231–232 (RF), 258–261 (HLSE), and Asp-348. Zn(2+) contacts are provided by His-258 and Asp-348.

Belongs to the metallo-dependent hydrolases superfamily. ATZ/TRZ family. Zn(2+) is required as a cofactor.

The protein resides in the cytoplasm. The catalysed reaction is guanine + H2O + H(+) = xanthine + NH4(+). It participates in purine metabolism; guanine degradation; xanthine from guanine: step 1/1. In terms of biological role, catalyzes the hydrolytic deamination of guanine, producing xanthine and ammonia. The chain is Probable guanine deaminase (GUD1) from Saccharomyces cerevisiae (strain ATCC 204508 / S288c) (Baker's yeast).